We begin with the raw amino-acid sequence, 229 residues long: Flagellar L-ring protein (229 aa).

The signal sequence occupies residues 1–25 (MKQVRLLPSATVRAACAVAVAALAG). A lipid anchor (N-palmitoyl cysteine) is attached at Cys26. Cys26 is lipidated: S-diacylglycerol cysteine.

The protein belongs to the FlgH family. As to quaternary structure, the basal body constitutes a major portion of the flagellar organelle and consists of four rings (L,P,S, and M) mounted on a central rod.

Its subcellular location is the cell outer membrane. The protein localises to the bacterial flagellum basal body. Its function is as follows. Assembles around the rod to form the L-ring and probably protects the motor/basal body from shearing forces during rotation. The protein is Flagellar L-ring protein of Burkholderia vietnamiensis (strain G4 / LMG 22486) (Burkholderia cepacia (strain R1808)).